Consider the following 693-residue polypeptide: Periplasmic alpha-galactoside-binding protein (693 aa).

A signal peptide spans 1 to 20 (MKTHRLNMTASLLIGISAFA).

It belongs to the bacterial solute-binding protein 5 family.

It localises to the periplasm. Its function is as follows. Involved in the transport of alpha-galactosides. Required for the utilization of raffinose and melibiose. Probably acts as a periplasmic substrate-binding protein for a transport system. This Rhizobium meliloti (strain 1021) (Ensifer meliloti) protein is Periplasmic alpha-galactoside-binding protein.